Here is a 277-residue protein sequence, read N- to C-terminus: Reaction center protein L chain (277 aa).

Transmembrane regions (helical) follow at residues 30–52 (FYVG…LIAW), 84–106 (GGIW…LREV), and 113–135 (GIGF…LVVI). Positions 154 and 174 each coordinate (7R,8Z)-bacteriochlorophyll b. The chain crosses the membrane as a helical span at residues 173–195 (AHMIAITFFFTTCLALALHGGLV). A Fe cation-binding site is contributed by H191. F217 is an a ubiquinone binding site. Fe cation is bound at residue H231. The chain crosses the membrane as a helical span at residues 233–255 (LGLFLALSAVFFSAVCMIISGPV).

The protein belongs to the reaction center PufL/M/PsbA/D family. In terms of assembly, reaction center is composed of four bacteriochlorophylls, two bacteriopheophytins, two ubiquinones, one iron, and three highly hydrophobic polypeptide chains (designated L, M, and H).

It localises to the cellular chromatophore membrane. The reaction center is a membrane-bound complex that mediates the initial photochemical event in the electron transfer process of photosynthesis. The sequence is that of Reaction center protein L chain (pufL) from Rhodopseudomonas palustris (strain ATCC BAA-98 / CGA009).